The sequence spans 305 residues: Testis-expressed protein 52 (305 aa).

The disordered stretch occupies residues 284-305 (HLSKAQASKSPARKRKRRPGHF). The segment covering 294 to 305 (PARKRKRRPGHF) has biased composition (basic residues).

Expressed in Testis.

The sequence is that of Testis-expressed protein 52 from Homo sapiens (Human).